The chain runs to 210 residues: Uridine kinase (210 aa).

13–20 (GGSGSGKT) is a binding site for ATP.

It belongs to the uridine kinase family.

Its subcellular location is the cytoplasm. It carries out the reaction uridine + ATP = UMP + ADP + H(+). The enzyme catalyses cytidine + ATP = CMP + ADP + H(+). The protein operates within pyrimidine metabolism; CTP biosynthesis via salvage pathway; CTP from cytidine: step 1/3. It functions in the pathway pyrimidine metabolism; UMP biosynthesis via salvage pathway; UMP from uridine: step 1/1. This Oceanobacillus iheyensis (strain DSM 14371 / CIP 107618 / JCM 11309 / KCTC 3954 / HTE831) protein is Uridine kinase.